The primary structure comprises 507 residues: RNA-splicing ligase RtcB homolog (507 aa).

5 residues coordinate Mn(2+): aspartate 121, cysteine 124, histidine 229, histidine 261, and histidine 355. 228–232 (NHYAE) is a GMP binding site. Residues 355–356 (HN), 404–407 (GGTM), serine 411, 430–433 (HGAG), and lysine 506 contribute to the GMP site. Residue histidine 430 is the GMP-histidine intermediate of the active site.

This sequence belongs to the RtcB family. As to quaternary structure, catalytic component of the tRNA-splicing ligase complex. It depends on Mn(2+) as a cofactor.

The enzyme catalyses a 3'-end 3'-phospho-ribonucleotide-RNA + a 5'-end dephospho-ribonucleoside-RNA + GTP = a ribonucleotidyl-ribonucleotide-RNA + GMP + diphosphate. It carries out the reaction a 3'-end 2',3'-cyclophospho-ribonucleotide-RNA + a 5'-end dephospho-ribonucleoside-RNA + GTP + H2O = a ribonucleotidyl-ribonucleotide-RNA + GMP + diphosphate + H(+). In terms of biological role, catalytic subunit of the tRNA-splicing ligase complex that acts by directly joining spliced tRNA halves to mature-sized tRNAs by incorporating the precursor-derived splice junction phosphate into the mature tRNA as a canonical 3',5'-phosphodiester. May act as an RNA ligase with broad substrate specificity, and may function toward other RNAs. This is RNA-splicing ligase RtcB homolog from Micromonas pusilla (strain CCMP1545) (Picoplanktonic green alga).